Here is a 196-residue protein sequence, read N- to C-terminus: Putative NADH dehydrogenase/NAD(P)H nitroreductase XOO4023 (196 aa).

It belongs to the nitroreductase family. HadB/RutE subfamily. FMN serves as cofactor.

In Xanthomonas oryzae pv. oryzae (strain MAFF 311018), this protein is Putative NADH dehydrogenase/NAD(P)H nitroreductase XOO4023.